A 114-amino-acid chain; its full sequence is UPF0342 protein NWMN_1737 (114 aa).

It belongs to the UPF0342 family.

This Staphylococcus aureus (strain Newman) protein is UPF0342 protein NWMN_1737.